Consider the following 141-residue polypeptide: Cholinesterase (141 aa).

Asn-39 carries an N-linked (GlcNAc...) asparagine glycan. 49 to 50 (GG) is a substrate binding site. The active-site Acyl-ester intermediate is the Ser-131. The residue at position 131 (Ser-131) is a Phosphoserine.

Belongs to the type-B carboxylesterase/lipase family. In terms of assembly, homotetramer; disulfide-linked. Dimer of dimers. Present in most cells except erythrocytes.

Its subcellular location is the secreted. It catalyses the reaction an acylcholine + H2O = a carboxylate + choline + H(+). Functionally, esterase with broad substrate specificity. Contributes to the inactivation of the neurotransmitter acetylcholine. Can degrade neurotoxic organophosphate esters. The protein is Cholinesterase (BCHE) of Sus scrofa (Pig).